We begin with the raw amino-acid sequence, 307 residues long: Homoserine O-acetyltransferase (307 aa).

C142 serves as the catalytic Acyl-thioester intermediate. Positions 163 and 192 each coordinate substrate. H235 acts as the Proton acceptor in catalysis. The active site involves E237. A substrate-binding site is contributed by R249.

This sequence belongs to the MetA family.

It is found in the cytoplasm. The enzyme catalyses L-homoserine + acetyl-CoA = O-acetyl-L-homoserine + CoA. It participates in amino-acid biosynthesis; L-methionine biosynthesis via de novo pathway; O-acetyl-L-homoserine from L-homoserine: step 1/1. Its function is as follows. Transfers an acetyl group from acetyl-CoA to L-homoserine, forming acetyl-L-homoserine. This is Homoserine O-acetyltransferase from Desulfitobacterium hafniense (strain Y51).